A 597-amino-acid polypeptide reads, in one-letter code: Arginine--tRNA ligase (597 aa).

The short motif at 125-135 (PNTNKPLHLGH) is the 'HIGH' region element.

It belongs to the class-I aminoacyl-tRNA synthetase family. Monomer.

The protein localises to the cytoplasm. It catalyses the reaction tRNA(Arg) + L-arginine + ATP = L-arginyl-tRNA(Arg) + AMP + diphosphate. This Porphyromonas gingivalis (strain ATCC 33277 / DSM 20709 / CIP 103683 / JCM 12257 / NCTC 11834 / 2561) protein is Arginine--tRNA ligase.